A 258-amino-acid polypeptide reads, in one-letter code: Putative [LysW]-aminoadipate/[LysW]-glutamate kinase (258 aa).

Substrate is bound by residues 33-34 (GG), Arg-60, and Asn-164.

The protein belongs to the acetylglutamate kinase family. LysZ subfamily.

It is found in the cytoplasm. The catalysed reaction is [amino-group carrier protein]-C-terminal-N-(1,4-dicarboxybutan-1-yl)-L-glutamine + ATP = [amino-group carrier protein]-C-terminal-N-(1-carboxy-5-phosphooxy-5-oxopentan-1-yl)-L-glutamine + ADP. It carries out the reaction [amino-group carrier protein]-C-terminal-gamma-(L-glutamyl)-L-glutamate + ATP = [amino-group carrier protein]-C-terminal-gamma-(5-phospho-L-glutamyl)-L-glutamate + ADP. It functions in the pathway amino-acid biosynthesis; L-lysine biosynthesis via AAA pathway; L-lysine from L-alpha-aminoadipate (Thermus route): step 2/5. It participates in amino-acid biosynthesis; L-arginine biosynthesis. Functionally, involved in both the arginine and lysine biosynthetic pathways. Phosphorylates the LysW-bound precursors glutamate (for arginine biosynthesis), respectively alpha-aminoadipate (for lysine biosynthesis). The chain is Putative [LysW]-aminoadipate/[LysW]-glutamate kinase from Caldivirga maquilingensis (strain ATCC 700844 / DSM 13496 / JCM 10307 / IC-167).